A 51-amino-acid chain; its full sequence is MREKIRLNSSAGTGHFYTTDKNKRTMPEKMEIKKYDPVVRKHVVYKEGKIK.

Positions 1–24 (MREKIRLNSSAGTGHFYTTDKNKR) are disordered.

The protein belongs to the bacterial ribosomal protein bL33 family.

In Cellvibrio japonicus (strain Ueda107) (Pseudomonas fluorescens subsp. cellulosa), this protein is Large ribosomal subunit protein bL33.